Reading from the N-terminus, the 99-residue chain is Large ribosomal subunit protein eL30 (99 aa).

The protein belongs to the eukaryotic ribosomal protein eL30 family.

This Methanosarcina acetivorans (strain ATCC 35395 / DSM 2834 / JCM 12185 / C2A) protein is Large ribosomal subunit protein eL30.